The primary structure comprises 81 residues: ATP synthase subunit c, chloroplastic (81 aa).

2 helical membrane-spanning segments follow: residues 3–23 (PLIA…ASIG) and 57–77 (LAFM…LLFA).

Belongs to the ATPase C chain family. In terms of assembly, F-type ATPases have 2 components, F(1) - the catalytic core - and F(0) - the membrane proton channel. F(1) has five subunits: alpha(3), beta(3), gamma(1), delta(1), epsilon(1). F(0) has four main subunits: a(1), b(1), b'(1) and c(10-14). The alpha and beta chains form an alternating ring which encloses part of the gamma chain. F(1) is attached to F(0) by a central stalk formed by the gamma and epsilon chains, while a peripheral stalk is formed by the delta, b and b' chains.

Its subcellular location is the plastid. It localises to the chloroplast thylakoid membrane. In terms of biological role, f(1)F(0) ATP synthase produces ATP from ADP in the presence of a proton or sodium gradient. F-type ATPases consist of two structural domains, F(1) containing the extramembraneous catalytic core and F(0) containing the membrane proton channel, linked together by a central stalk and a peripheral stalk. During catalysis, ATP synthesis in the catalytic domain of F(1) is coupled via a rotary mechanism of the central stalk subunits to proton translocation. Functionally, key component of the F(0) channel; it plays a direct role in translocation across the membrane. A homomeric c-ring of between 10-14 subunits forms the central stalk rotor element with the F(1) delta and epsilon subunits. This chain is ATP synthase subunit c, chloroplastic, found in Chaetosphaeridium globosum (Charophycean green alga).